The primary structure comprises 490 residues: Acetyl-coenzyme A carboxylase carboxyl transferase subunit beta, chloroplastic (490 aa).

The tract at residues 184–203 (LNSSENEGSSRRTRTKGSDL) is disordered. The CoA carboxyltransferase N-terminal domain occupies 221-490 (LWVQCENCYG…PLNQKSSKIK (270 aa)). Zn(2+) is bound by residues Cys-225, Cys-228, Cys-244, and Cys-247. The segment at 225–247 (CENCYGLNYKKFLKSKMNICEQC) adopts a C4-type zinc-finger fold.

It belongs to the AccD/PCCB family. As to quaternary structure, acetyl-CoA carboxylase is a heterohexamer composed of biotin carboxyl carrier protein, biotin carboxylase and 2 subunits each of ACCase subunit alpha and ACCase plastid-coded subunit beta (accD). Requires Zn(2+) as cofactor.

Its subcellular location is the plastid. It is found in the chloroplast stroma. It carries out the reaction N(6)-carboxybiotinyl-L-lysyl-[protein] + acetyl-CoA = N(6)-biotinyl-L-lysyl-[protein] + malonyl-CoA. The protein operates within lipid metabolism; malonyl-CoA biosynthesis; malonyl-CoA from acetyl-CoA: step 1/1. Component of the acetyl coenzyme A carboxylase (ACC) complex. Biotin carboxylase (BC) catalyzes the carboxylation of biotin on its carrier protein (BCCP) and then the CO(2) group is transferred by the transcarboxylase to acetyl-CoA to form malonyl-CoA. This chain is Acetyl-coenzyme A carboxylase carboxyl transferase subunit beta, chloroplastic, found in Solanum bulbocastanum (Wild potato).